Consider the following 132-residue polypeptide: Small ribosomal subunit protein uS8 (132 aa).

The protein belongs to the universal ribosomal protein uS8 family. As to quaternary structure, part of the 30S ribosomal subunit. Contacts proteins S5 and S12.

In terms of biological role, one of the primary rRNA binding proteins, it binds directly to 16S rRNA central domain where it helps coordinate assembly of the platform of the 30S subunit. The polypeptide is Small ribosomal subunit protein uS8 (Clostridium kluyveri (strain NBRC 12016)).